The following is a 56-amino-acid chain: MKRQKRDRLERAHSKGYQAGILGHPKDYCPYKTTVESRSQWLGGWREAMEDRAVTA.

It belongs to the ribosome modulation factor family.

Its subcellular location is the cytoplasm. Its function is as follows. During stationary phase, converts 70S ribosomes to an inactive dimeric form (100S ribosomes). The sequence is that of Ribosome modulation factor from Serratia proteamaculans (strain 568).